Here is a 256-residue protein sequence, read N- to C-terminus: 1-(5-phosphoribosyl)-5-[(5-phosphoribosylamino)methylideneamino] imidazole-4-carboxamide isomerase (256 aa).

Asp-8 (proton acceptor) is an active-site residue. The active-site Proton donor is the Asp-130.

Belongs to the HisA/HisF family.

Its subcellular location is the cytoplasm. The catalysed reaction is 1-(5-phospho-beta-D-ribosyl)-5-[(5-phospho-beta-D-ribosylamino)methylideneamino]imidazole-4-carboxamide = 5-[(5-phospho-1-deoxy-D-ribulos-1-ylimino)methylamino]-1-(5-phospho-beta-D-ribosyl)imidazole-4-carboxamide. It participates in amino-acid biosynthesis; L-histidine biosynthesis; L-histidine from 5-phospho-alpha-D-ribose 1-diphosphate: step 4/9. The protein is 1-(5-phosphoribosyl)-5-[(5-phosphoribosylamino)methylideneamino] imidazole-4-carboxamide isomerase of Chlorobium luteolum (strain DSM 273 / BCRC 81028 / 2530) (Pelodictyon luteolum).